Here is a 215-residue protein sequence, read N- to C-terminus: Cytochrome b6 (215 aa).

Residues 32–52 (IFYCLGGITLTCFLVQVATGF) traverse the membrane as a helical segment. Heme c is bound at residue C35. 2 residues coordinate heme b: H86 and H100. A run of 3 helical transmembrane segments spans residues 90-110 (ASMM…TGGF), 116-136 (LTWV…VTGY), and 186-206 (LHTF…FLMI). Heme b contacts are provided by H187 and H202.

This sequence belongs to the cytochrome b family. PetB subfamily. As to quaternary structure, the 4 large subunits of the cytochrome b6-f complex are cytochrome b6, subunit IV (17 kDa polypeptide, PetD), cytochrome f and the Rieske protein, while the 4 small subunits are PetG, PetL, PetM and PetN. The complex functions as a dimer. Heme b is required as a cofactor. Heme c serves as cofactor.

The protein localises to the plastid. The protein resides in the chloroplast thylakoid membrane. Its function is as follows. Component of the cytochrome b6-f complex, which mediates electron transfer between photosystem II (PSII) and photosystem I (PSI), cyclic electron flow around PSI, and state transitions. This Ostreococcus tauri protein is Cytochrome b6.